The chain runs to 355 residues: MEWIQSLPKIELHAHLNGSIRDSTLLELARVLGEKGVIVFADVEHVIQKNDRSLVEVFKLFDLIHKLTTDHKTVTRITREVVEDFALENVVYLELRTTPKRSDSIGMSKRSYMEAVIQGLRSVSEVDIDFVTASDSQKLHNAGDGIGRKKIYVRLLLSIDRRETTESAMETVKLALEMRDVGVVGIDLSGNPLVGEWSTFLPALQYAKDNDLHITLHCGEVPNPKEIQAMLDFKPHRIGHACFFKDEDWTKLKSFRIPVEICLTSNIVTKSISSIDIHHFADLYNAKHPLILCTDDFGVFSTSLSNEYALAVRSLGLSKSETFALARAAIDATFAEDEVKQQLRFIFDSASPEHV.

His13 and His15 together coordinate Zn(2+). N(6)-methyl-AMP contacts are provided by residues His15, Asn17, His65, 97-100, Asp160, and Gly190; that span reads TTPK. His217 lines the Zn(2+) pocket. The N(6)-methyl-AMP site is built by Glu220, Asp295, and Asp296. The active-site Proton donor is the Glu220. Asp295 contacts Zn(2+).

Belongs to the metallo-dependent hydrolases superfamily. Adenosine and AMP deaminases family. As to quaternary structure, monomer. Requires Zn(2+) as cofactor.

It is found in the cytoplasm. It localises to the cytosol. The enzyme catalyses N(6)-methyl-AMP + H2O + H(+) = IMP + methylamine. In terms of biological role, catalyzes the hydrolysis of the free cytosolic methylated adenosine nucleotide N(6)-methyl-AMP (N6-mAMP) to produce inositol monophosphate (IMP) and methylamine. Is required for the catabolism of cytosolic N6-mAMP, which is derived from the degradation of mRNA containing N6-methylated adenine (m6A). Does not possess deaminase activity toward adenosine, AMP, N6-methyladenosine, or N6-mATP in vitro. This is N6-mAMP deaminase from Arabidopsis thaliana (Mouse-ear cress).